We begin with the raw amino-acid sequence, 436 residues long: Methylenetetrahydrofolate--tRNA-(uracil-5-)-methyltransferase TrmFO (436 aa).

9-14 (GAGLAG) is an FAD binding site.

Belongs to the MnmG family. TrmFO subfamily. It depends on FAD as a cofactor.

It localises to the cytoplasm. The enzyme catalyses uridine(54) in tRNA + (6R)-5,10-methylene-5,6,7,8-tetrahydrofolate + NADH + H(+) = 5-methyluridine(54) in tRNA + (6S)-5,6,7,8-tetrahydrofolate + NAD(+). It catalyses the reaction uridine(54) in tRNA + (6R)-5,10-methylene-5,6,7,8-tetrahydrofolate + NADPH + H(+) = 5-methyluridine(54) in tRNA + (6S)-5,6,7,8-tetrahydrofolate + NADP(+). Catalyzes the folate-dependent formation of 5-methyl-uridine at position 54 (M-5-U54) in all tRNAs. The sequence is that of Methylenetetrahydrofolate--tRNA-(uracil-5-)-methyltransferase TrmFO from Ligilactobacillus salivarius (strain UCC118) (Lactobacillus salivarius).